We begin with the raw amino-acid sequence, 1361 residues long: DNA-directed RNA polymerase subunit beta' (1361 aa).

Zn(2+) contacts are provided by cysteine 69, cysteine 71, cysteine 84, and cysteine 87. 3 residues coordinate Mg(2+): aspartate 460, aspartate 462, and aspartate 464. Residues cysteine 808, cysteine 882, cysteine 889, and cysteine 892 each coordinate Zn(2+).

The protein belongs to the RNA polymerase beta' chain family. In terms of assembly, the RNAP catalytic core consists of 2 alpha, 1 beta, 1 beta' and 1 omega subunit. When a sigma factor is associated with the core the holoenzyme is formed, which can initiate transcription. The cofactor is Mg(2+). It depends on Zn(2+) as a cofactor.

It carries out the reaction RNA(n) + a ribonucleoside 5'-triphosphate = RNA(n+1) + diphosphate. Its function is as follows. DNA-dependent RNA polymerase catalyzes the transcription of DNA into RNA using the four ribonucleoside triphosphates as substrates. This is DNA-directed RNA polymerase subunit beta' from Rickettsia bellii (strain RML369-C).